The following is a 518-amino-acid chain: Nitrogenase iron-iron protein alpha chain (518 aa).

Cys49 and Cys75 together coordinate [8Fe-7S] cluster. Residues Cys257 and His423 each contribute to the [8Fe-9S-C-homocitryl] cluster site.

In terms of assembly, hexamer of two alpha, two beta, and two delta chains. It depends on [8Fe-7S] cluster as a cofactor. Requires [8Fe-9S-C-homocitryl] cluster as cofactor.

The catalysed reaction is N2 + 8 reduced [2Fe-2S]-[ferredoxin] + 16 ATP + 16 H2O = H2 + 8 oxidized [2Fe-2S]-[ferredoxin] + 2 NH4(+) + 16 ADP + 16 phosphate + 6 H(+). Functionally, this iron-iron protein is part of the nitrogenase complex that catalyzes the key enzymatic reactions in nitrogen fixation. Other nitrogenase complexes utilize a molybdenum-iron protein or a vanadium-iron protein. This Ruminiclostridium hungatei (Clostridium hungatei) protein is Nitrogenase iron-iron protein alpha chain (anfD).